The primary structure comprises 1933 residues: WD repeat-containing protein 81 (1933 aa).

Residues 1-643 (MAQGSRRRKV…TPCESGWTRE (643 aa)) are necessary and sufficient for the interaction with SQSTM1. Disordered regions lie at residues 305 to 334 (PSED…RPGC), 663 to 714 (SIPG…GKIV), 1038 to 1057 (CAFG…SGLG), 1090 to 1209 (QPQE…EGKE), 1517 to 1544 (SLRN…SCLQ), and 1565 to 1590 (DSQP…SRNE). Over residues 314–330 (SEEKDRTGVKSEKDGEG) the composition is skewed to basic and acidic residues. The BEACH domain occupies 333–610 (GCPTCQKELR…IPRLLVQPIQ (278 aa)). Low complexity predominate over residues 668–693 (AGDQPGSSSSQASPGLLPFSAPSGSR). 2 stretches are compositionally biased toward polar residues: residues 1100–1112 (GQLS…SEAS) and 1131–1140 (VKSGDSSQDL). Acidic residues predominate over residues 1145 to 1166 (GSEEEEEEEEGCVVLEEEEQDE). 5 WD repeats span residues 1638 to 1677 (GHTG…DGTS), 1684 to 1724 (IYAQ…TLRT), 1776 to 1815 (LNPG…VLRG), 1818 to 1856 (AHEG…PTHH), and 1903 to 1933 (NFRG…RLLA).

Belongs to the WD repeat WDR81 family. In terms of assembly, interacts with WDR91; involved in early to late endosome cargo transport. Interacts with BECN1; negatively regulates the PI3 kinase/PI3K activity associated with endosomal membranes. Interacts with SQSTM1; the interaction is direct and regulates the interaction of SQSTM1 with ubiquitinated proteins. Interacts with MAP1LC3C; recruits MAP1LC3C to ubiquitinated protein aggregates in the aggrephagy process.

The protein localises to the early endosome membrane. It localises to the late endosome membrane. The protein resides in the lysosome membrane. It is found in the cytoplasmic vesicle. Its subcellular location is the autophagosome membrane. The protein localises to the mitochondrion. It localises to the cytoplasm. The protein resides in the cytosol. Its function is as follows. Functions as a negative regulator of the PI3 kinase/PI3K activity associated with endosomal membranes via BECN1, a core subunit of the PI3K complex. By modifying the phosphatidylinositol 3-phosphate/PtdInsP3 content of endosomal membranes may regulate endosome fusion, recycling, sorting and early to late endosome transport. It is for instance, required for the delivery of cargos like BST2/tetherin from early to late endosome and thereby participates indirectly to their degradation by the lysosome. May also play a role in aggrephagy, the macroautophagic degradation of ubiquitinated protein aggregates. In this process, may regulate the interaction of SQSTM1 with ubiquitinated proteins and also recruit MAP1LC3C. May also be involved in maintenance of normal mitochondrial structure and organization. In Rattus norvegicus (Rat), this protein is WD repeat-containing protein 81.